The chain runs to 213 residues: Histone H1.2 (213 aa).

Positions 1–17 (MSETAPAAPAAAPPAEK) are enriched in low complexity. The disordered stretch occupies residues 1 to 41 (MSETAPAAPAAAPPAEKAPVKKKAAKKAGGTPRKASGPPVS). The residue at position 2 (Ser-2) is an N-acetylserine; partial. Ser-2 bears the Phosphoserine mark. N6-acetyllysine is present on Lys-17. N6-(2-hydroxyisobutyryl)lysine occurs at positions 23, 26, and 27. Lys-34 is subject to N6-(beta-hydroxybutyryl)lysine; alternate. Lys-34 is subject to N6-crotonyllysine; alternate. An N6-methyllysine; alternate modification is found at Lys-34. The H15 domain occupies 36 to 109 (SGPPVSELIT…GASGSFKLNK (74 aa)). Lys-46 is subject to N6-(2-hydroxyisobutyryl)lysine. Lys-52 is modified (N6-(beta-hydroxybutyryl)lysine; alternate). Lys-52 is subject to N6-(2-hydroxyisobutyryl)lysine; alternate. Position 54 is a citrulline (Arg-54). Lys-63 is subject to N6-(2-hydroxyisobutyryl)lysine. N6-(beta-hydroxybutyryl)lysine; alternate is present on Lys-64. Lys-64 is subject to N6-crotonyllysine; alternate. Lys-64 is modified (N6-(2-hydroxyisobutyryl)lysine; alternate). 2 positions are modified to N6-(2-hydroxyisobutyryl)lysine: Lys-75 and Lys-81. An N6-(beta-hydroxybutyryl)lysine; alternate mark is found at Lys-85 and Lys-90. N6-crotonyllysine; alternate is present on residues Lys-85, Lys-90, and Lys-97. Residues Lys-85, Lys-90, and Lys-97 each carry the N6-(2-hydroxyisobutyryl)lysine; alternate modification. The interval 92–213 (TLVQTKGTGA…KPKKAAPKKK (122 aa)) is disordered. Lys-97 carries the post-translational modification N6-succinyllysine; alternate. A Phosphoserine; by PKC modification is found at Ser-104. Lys-106 bears the N6-(beta-hydroxybutyryl)lysine mark. N6-(2-hydroxyisobutyryl)lysine is present on residues Lys-110, Lys-117, Lys-121, Lys-129, and Lys-136. Over residues 119–140 (KVKKAGGTKPKKPVGAAKKPKK) the composition is skewed to basic residues. Thr-146 is modified (phosphothreonine). At Lys-148 the chain carries N6-(2-hydroxyisobutyryl)lysine. Over residues 149 to 160 (KSAKKTPKKAKK) the composition is skewed to basic residues. N6-crotonyllysine; alternate is present on residues Lys-159 and Lys-168. N6-(2-hydroxyisobutyryl)lysine; alternate occurs at positions 159 and 168. A compositionally biased stretch (basic residues) spans 169–186 (KVAKSPKKAKVAKPKKAA). At Lys-187 the chain carries N6-methyllysine; by EHMT1 and EHMT2. Position 188 is an ADP-ribosylserine (Ser-188). Residues 193-213 (VKPKAAKPKVVKPKKAAPKKK) are compositionally biased toward basic residues. Lys-213 carries the N6-(2-hydroxyisobutyryl)lysine modification.

The protein belongs to the histone H1/H5 family. As to quaternary structure, interacts with TSC22D1 isoforms 2 and 5. H1 histones are progressively phosphorylated during the cell cycle, becoming maximally phosphorylated during late G2 phase and M phase, and being dephosphorylated sharply thereafter. In terms of processing, crotonylation (Kcr) is specifically present in male germ cells and marks testis-specific genes in post-meiotic cells, including X-linked genes that escape sex chromosome inactivation in haploid cells. Crotonylation marks active promoters and enhancers and confers resistance to transcriptional repressors. It is also associated with post-meiotically activated genes on autosomes. Post-translationally, citrullination at Arg-54 (H1R54ci) by PADI4 takes place within the DNA-binding site of H1 and results in its displacement from chromatin and global chromatin decondensation, thereby promoting pluripotency and stem cell maintenance. ADP-ribosylated on Ser-188 in response to DNA damage.

The protein resides in the nucleus. It localises to the chromosome. In terms of biological role, histone H1 protein binds to linker DNA between nucleosomes forming the macromolecular structure known as the chromatin fiber. Histones H1 are necessary for the condensation of nucleosome chains into higher-order structured fibers. Also acts as a regulator of individual gene transcription through chromatin remodeling, nucleosome spacing and DNA methylation. The sequence is that of Histone H1.2 from Homo sapiens (Human).